We begin with the raw amino-acid sequence, 128 residues long: MPKSVIIPPGTSTPIAPFVPGTLADGVVYVSGTLPFDKDNNVVFINDPKAQTRHVLETIKTVIETAGGTMEDVTFNSIFITDWKNYAAINEIYAEFFPGDKPARFCIQCGLVKPDALVEIATVAHIGK.

The protein belongs to the RutC family.

The catalysed reaction is (Z)-3-aminoacrylate + H2O + H(+) = 3-oxopropanoate + NH4(+). Functionally, involved in pyrimidine catabolism. Catalyzes the deamination of 3-aminoacrylate to malonic semialdehyde, a reaction that can also occur spontaneously. RutC may facilitate the reaction and modulate the metabolic fitness, rather than catalyzing essential functions. This is 3-aminoacrylate deaminase RutC from Enterobacter cloacae subsp. cloacae (strain ATCC 13047 / DSM 30054 / NBRC 13535 / NCTC 10005 / WDCM 00083 / NCDC 279-56).